Reading from the N-terminus, the 330-residue chain is 4-hydroxythreonine-4-phosphate dehydrogenase (330 aa).

A substrate-binding site is contributed by T133. Residues H161, H206, and H261 each coordinate a divalent metal cation. Substrate contacts are provided by K269, N278, and R287.

This sequence belongs to the PdxA family. As to quaternary structure, homodimer. The cofactor is Zn(2+). Mg(2+) serves as cofactor. It depends on Co(2+) as a cofactor.

It is found in the cytoplasm. It carries out the reaction 4-(phosphooxy)-L-threonine + NAD(+) = 3-amino-2-oxopropyl phosphate + CO2 + NADH. It participates in cofactor biosynthesis; pyridoxine 5'-phosphate biosynthesis; pyridoxine 5'-phosphate from D-erythrose 4-phosphate: step 4/5. Its function is as follows. Catalyzes the NAD(P)-dependent oxidation of 4-(phosphooxy)-L-threonine (HTP) into 2-amino-3-oxo-4-(phosphooxy)butyric acid which spontaneously decarboxylates to form 3-amino-2-oxopropyl phosphate (AHAP). This is 4-hydroxythreonine-4-phosphate dehydrogenase from Xylella fastidiosa (strain Temecula1 / ATCC 700964).